Reading from the N-terminus, the 239-residue chain is Ribonuclease 3 (239 aa).

An RNase III domain is found at 11–133 (HAAIQKKLGY…MFAAVSFDAD (123 aa)). A Mg(2+)-binding site is contributed by Glu-46. The active site involves Asp-50. The Mg(2+) site is built by Asp-119 and Glu-122. Glu-122 is an active-site residue. The region spanning 160–230 (DGKTALQEAL…AKEALKWLEE (71 aa)) is the DRBM domain.

Belongs to the ribonuclease III family. In terms of assembly, homodimer. Mg(2+) is required as a cofactor.

The protein localises to the cytoplasm. It carries out the reaction Endonucleolytic cleavage to 5'-phosphomonoester.. Digests double-stranded RNA. Involved in the processing of primary rRNA transcript to yield the immediate precursors to the large and small rRNAs (23S and 16S). Also processes some mRNAs, and tRNAs when they are encoded in the rRNA operon. Its function is as follows. CRISPR (clustered regularly interspaced short palindromic repeat) is an adaptive immune system that provides protection against mobile genetic elements (viruses, transposable elements and conjugative plasmids). CRISPR clusters contain spacers, sequences complementary to antecedent mobile elements, and target invading nucleic acids. CRISPR clusters are transcribed and processed into CRISPR RNA (crRNA). In this organism endogenous ribonuclease 3 and Cas9 are required for correct coprocessing of pre-crRNA and the trans-encoded small RNA (tracrRNA). Cas9, crRNA and tracrRNA are required for cleavage of invading DNA. Complements pre-crRNA and tracrRNA coprocessing defects in an rnc deletion in S.pyogenes strain 370. This is Ribonuclease 3 from Neisseria meningitidis serogroup A / serotype 4A (strain DSM 15465 / Z2491).